The following is a 199-amino-acid chain: Cytochrome c-type cyt cy (199 aa).

The chain crosses the membrane as a helical span at residues 7–27; sequence ITKIGVTLFAVALFYGFIYML. Over residues 69–80 the composition is skewed to low complexity; it reads AAETAEAAAPAE. Residues 69 to 93 form a disordered region; sequence AAETAEAAAPAEPAAPPPPAYVEVD. Positions 112, 115, 116, and 148 each coordinate heme c.

In terms of processing, binds 1 heme c group covalently per subunit.

The protein resides in the cell membrane. In terms of biological role, electron transfer pathways that operates during photosynthesis. This Rhodobacter capsulatus (strain ATCC BAA-309 / NBRC 16581 / SB1003) protein is Cytochrome c-type cyt cy (cycY).